A 294-amino-acid chain; its full sequence is ATP synthase gamma chain (294 aa).

The protein belongs to the ATPase gamma chain family. As to quaternary structure, F-type ATPases have 2 components, CF(1) - the catalytic core - and CF(0) - the membrane proton channel. CF(1) has five subunits: alpha(3), beta(3), gamma(1), delta(1), epsilon(1). CF(0) has three main subunits: a, b and c.

The protein localises to the cell inner membrane. Its function is as follows. Produces ATP from ADP in the presence of a proton gradient across the membrane. The gamma chain is believed to be important in regulating ATPase activity and the flow of protons through the CF(0) complex. This is ATP synthase gamma chain from Campylobacter lari (strain RM2100 / D67 / ATCC BAA-1060).